A 770-amino-acid polypeptide reads, in one-letter code: Transducin-like enhancer protein 1 (770 aa).

The tract at residues 1–131 is q domain; the sequence is MFPQSRHPTP…IIGQQQLQAQ (131 aa). 2 disordered regions span residues 128–157 and 176–348; these read LQAQ…GIPP and HLAI…PAID. A GP domain region spans residues 132–199; the sequence is HLSHGHGPPV…HHRDREPGTS (68 aa). Composition is skewed to basic and acidic residues over residues 178–196 and 209–246; these read AIKD…DREP and RGTD…KSDD. The ccN domain stretch occupies residues 200 to 268; sequence NSLLVPDSLR…SPRASPAHSP (69 aa). Residues 225–228 carry the Nuclear localization signal motif; it reads KKRK. A Phosphoserine modification is found at Ser-239. Low complexity predominate over residues 257–266; it reads PSSPRASPAH. Phosphoserine; by CDK1 is present on residues Ser-259, Ser-263, and Ser-267. The span at 267 to 283 shows a compositional bias: basic and acidic residues; the sequence is SPRENGIDKNRLLKKDA. Residues 269-450 form an SP domain region; sequence RENGIDKNRL…GGKPAYSFHV (182 aa). Residues 284-298 are compositionally biased toward low complexity; sequence SSSPASTASSASSTS. Position 286 is a phosphoserine (Ser-286). A compositionally biased stretch (basic and acidic residues) spans 300–310; sequence KSKEMSLHEKA. 6 WD repeats span residues 470-501, 528-558, 572-602, 614-644, 696-726, and 737-767; these read GIPR…HVYT, NRDN…SIWD, SSAP…AVWD, GHTD…RSWD, LHES…NAWR, and KESS…TVYE.

It belongs to the WD repeat Groucho/TLE family. In terms of assembly, homooligomer and heterooligomer with other family members. Binds RUNX1, RUNX3, FOXA2, KDM6A, UTY, histone H3, HESX1, ESRRG and the NF-kappa-B subunit RELA. Interacts with HES1 (via WRPW motif). Binds TCF7, LEF1, TCF7L1 and TCF7L2. Interacts with SIX3. Interacts with EFNB1. Interacts with TLE4. Interacts with FOXG1/BF-1; the interaction is inhibited by TLE6/GRG6. In terms of processing, phosphorylated, probably by CDK1. The degree of phosphorylation varies throughout the cell cycle, and is highest at the G2/M transition. Becomes hyperphosphorylated in response to cell differentiation and interaction with HES1 or RUNX1. Post-translationally, ubiquitinated by XIAP/BIRC4. In all tissues examined, mostly in brain, liver and muscle.

The protein localises to the nucleus. In terms of biological role, transcriptional corepressor that binds to a number of transcription factors. Inhibits NF-kappa-B-regulated gene expression. Inhibits the transcriptional activation mediated by FOXA2, and by CTNNB1 and TCF family members in Wnt signaling. Enhances FOXG1/BF-1- and HES1-mediated transcriptional repression. The effects of full-length TLE family members may be modulated by association with dominant-negative AES. Unusual function as coactivator for ESRRG. This chain is Transducin-like enhancer protein 1 (TLE1), found in Homo sapiens (Human).